A 304-amino-acid polypeptide reads, in one-letter code: Acetaldehyde dehydrogenase 1 (304 aa).

Residue 11–14 (SGNI) participates in NAD(+) binding. C130 (acyl-thioester intermediate) is an active-site residue. NAD(+) is bound by residues 161 to 169 (SVGPGTRAN) and N272.

The protein belongs to the acetaldehyde dehydrogenase family.

It catalyses the reaction acetaldehyde + NAD(+) + CoA = acetyl-CoA + NADH + H(+). In Azoarcus sp. (strain BH72), this protein is Acetaldehyde dehydrogenase 1 (lapF).